Here is a 255-residue protein sequence, read N- to C-terminus: 4-diphosphocytidyl-2-C-methyl-D-erythritol kinase (255 aa).

Residue lysine 9 is part of the active site. 95-105 (PSQAGLGGGSS) contacts ATP. Residue aspartate 137 is part of the active site.

It belongs to the GHMP kinase family. IspE subfamily.

It catalyses the reaction 4-CDP-2-C-methyl-D-erythritol + ATP = 4-CDP-2-C-methyl-D-erythritol 2-phosphate + ADP + H(+). It participates in isoprenoid biosynthesis; isopentenyl diphosphate biosynthesis via DXP pathway; isopentenyl diphosphate from 1-deoxy-D-xylulose 5-phosphate: step 3/6. In terms of biological role, catalyzes the phosphorylation of the position 2 hydroxy group of 4-diphosphocytidyl-2C-methyl-D-erythritol. This chain is 4-diphosphocytidyl-2-C-methyl-D-erythritol kinase, found in Sulfurovum sp. (strain NBC37-1).